Consider the following 208-residue polypeptide: Protein-L-isoaspartate O-methyltransferase (208 aa).

S59 is an active-site residue.

It belongs to the methyltransferase superfamily. L-isoaspartyl/D-aspartyl protein methyltransferase family.

Its subcellular location is the cytoplasm. It catalyses the reaction [protein]-L-isoaspartate + S-adenosyl-L-methionine = [protein]-L-isoaspartate alpha-methyl ester + S-adenosyl-L-homocysteine. In terms of biological role, catalyzes the methyl esterification of L-isoaspartyl residues in peptides and proteins that result from spontaneous decomposition of normal L-aspartyl and L-asparaginyl residues. It plays a role in the repair and/or degradation of damaged proteins. The polypeptide is Protein-L-isoaspartate O-methyltransferase (Sodalis glossinidius (strain morsitans)).